We begin with the raw amino-acid sequence, 505 residues long: AMP phosphorylase (505 aa).

Residues Gly170, Ser196–Ser201, and Thr205 contribute to the AMP site. Asp258 acts as the Proton donor in catalysis. Ser266 and Lys290 together coordinate AMP.

It belongs to the thymidine/pyrimidine-nucleoside phosphorylase family. Type 2 subfamily.

It catalyses the reaction AMP + phosphate = alpha-D-ribose 1,5-bisphosphate + adenine. The enzyme catalyses CMP + phosphate = cytosine + alpha-D-ribose 1,5-bisphosphate. It carries out the reaction UMP + phosphate = alpha-D-ribose 1,5-bisphosphate + uracil. In terms of biological role, catalyzes the conversion of AMP and phosphate to adenine and ribose 1,5-bisphosphate (R15P). Exhibits phosphorylase activity toward CMP and UMP in addition to AMP. Functions in an archaeal AMP degradation pathway, together with R15P isomerase and RubisCO. The sequence is that of AMP phosphorylase from Methanococcus maripaludis (strain C6 / ATCC BAA-1332).